The chain runs to 222 residues: 7-cyano-7-deazaguanine synthase (222 aa).

14 to 24 (FSGGQDSTTCL) is an ATP binding site. Residues cysteine 190, cysteine 199, cysteine 202, and cysteine 205 each contribute to the Zn(2+) site.

Belongs to the QueC family. As to quaternary structure, homodimer. It depends on Zn(2+) as a cofactor.

The catalysed reaction is 7-carboxy-7-deazaguanine + NH4(+) + ATP = 7-cyano-7-deazaguanine + ADP + phosphate + H2O + H(+). Its pathway is purine metabolism; 7-cyano-7-deazaguanine biosynthesis. Its function is as follows. Catalyzes the ATP-dependent conversion of 7-carboxy-7-deazaguanine (CDG) to 7-cyano-7-deazaguanine (preQ(0)). In Staphylococcus aureus (strain bovine RF122 / ET3-1), this protein is 7-cyano-7-deazaguanine synthase.